Reading from the N-terminus, the 225-residue chain is Ribonuclease 3 (225 aa).

The 123-residue stretch at 7–129 (IPRLCRTLGY…IIGAIYLDSD (123 aa)) folds into the RNase III domain. Mg(2+) is bound at residue Glu-42. Residue Asp-46 is part of the active site. Mg(2+)-binding residues include Asp-115 and Glu-118. Residue Glu-118 is part of the active site. A DRBM domain is found at 155-225 (DPKTLLQEYL…AAQVLELIKK (71 aa)).

The protein belongs to the ribonuclease III family. As to quaternary structure, homodimer. It depends on Mg(2+) as a cofactor.

Its subcellular location is the cytoplasm. The enzyme catalyses Endonucleolytic cleavage to 5'-phosphomonoester.. Its function is as follows. Digests double-stranded RNA. Involved in the processing of primary rRNA transcript to yield the immediate precursors to the large and small rRNAs (23S and 16S). Processes some mRNAs, and tRNAs when they are encoded in the rRNA operon. Processes pre-crRNA and tracrRNA of type II CRISPR loci if present in the organism. The protein is Ribonuclease 3 of Shewanella pealeana (strain ATCC 700345 / ANG-SQ1).